A 385-amino-acid polypeptide reads, in one-letter code: Protein pelota homolog (385 aa).

The protein belongs to the eukaryotic release factor 1 family. Pelota subfamily. In terms of assembly, component of the Pelota-HBS1L complex, also named Dom34-Hbs1 complex, composed of PELO and HBS1L. It depends on a divalent metal cation as a cofactor.

It localises to the cytoplasm. Functionally, component of the Pelota-HBS1L complex, a complex that recognizes stalled ribosomes and triggers the No-Go Decay (NGD) pathway. In the Pelota-HBS1L complex, PELO recognizes ribosomes stalled at the 3' end of an mRNA and engages stalled ribosomes by destabilizing mRNA in the mRNA channel. Following mRNA extraction from stalled ribosomes by the SKI complex, the Pelota-HBS1L complex promotes recruitment of ABCE1, which drives the disassembly of stalled ribosomes, followed by degradation of damaged mRNAs as part of the NGD pathway. This Danio rerio (Zebrafish) protein is Protein pelota homolog (pelo).